Consider the following 690-residue polypeptide: Methionine--tRNA ligase (690 aa).

Positions 12–22 (PYANGPLHLGH) match the 'HIGH' region motif. Residues Cys-144, Cys-147, Cys-157, and Cys-160 each contribute to the Zn(2+) site. Positions 333–337 (QFSKS) match the 'KMSKS' region motif. Lys-336 contacts ATP. A tRNA-binding domain is found at 535 to 632 (KKINIDLMVG…VNADDGSRMK (98 aa)).

Belongs to the class-I aminoacyl-tRNA synthetase family. MetG type 1 subfamily. Homodimer. Zn(2+) is required as a cofactor.

Its subcellular location is the cytoplasm. The catalysed reaction is tRNA(Met) + L-methionine + ATP = L-methionyl-tRNA(Met) + AMP + diphosphate. In terms of biological role, is required not only for elongation of protein synthesis but also for the initiation of all mRNA translation through initiator tRNA(fMet) aminoacylation. In Picrophilus torridus (strain ATCC 700027 / DSM 9790 / JCM 10055 / NBRC 100828 / KAW 2/3), this protein is Methionine--tRNA ligase.